The following is a 286-amino-acid chain: Pyridoxal kinase PdxY (286 aa).

Residues Ser-9 and 44–45 (MQ) each bind substrate. The ATP site is built by Asp-111, Glu-147, and Lys-180. Residue Asp-221 participates in substrate binding.

It belongs to the pyridoxine kinase family. PdxY subfamily. In terms of assembly, homodimer. The cofactor is Mg(2+).

The catalysed reaction is pyridoxal + ATP = pyridoxal 5'-phosphate + ADP + H(+). Its pathway is cofactor metabolism; pyridoxal 5'-phosphate salvage; pyridoxal 5'-phosphate from pyridoxal: step 1/1. Functionally, pyridoxal kinase involved in the salvage pathway of pyridoxal 5'-phosphate (PLP). Catalyzes the phosphorylation of pyridoxal to PLP. This Burkholderia orbicola (strain AU 1054) protein is Pyridoxal kinase PdxY.